Here is a 308-residue protein sequence, read N- to C-terminus: Aspartate carbamoyltransferase catalytic subunit (308 aa).

Carbamoyl phosphate-binding residues include arginine 51 and threonine 52. L-aspartate is bound at residue lysine 80. Residues arginine 101, histidine 129, and glutamine 132 each contribute to the carbamoyl phosphate site. The L-aspartate site is built by arginine 162 and arginine 224. Carbamoyl phosphate contacts are provided by leucine 263 and proline 264.

The protein belongs to the aspartate/ornithine carbamoyltransferase superfamily. ATCase family. In terms of assembly, heterododecamer (2C3:3R2) of six catalytic PyrB chains organized as two trimers (C3), and six regulatory PyrI chains organized as three dimers (R2).

It carries out the reaction carbamoyl phosphate + L-aspartate = N-carbamoyl-L-aspartate + phosphate + H(+). It participates in pyrimidine metabolism; UMP biosynthesis via de novo pathway; (S)-dihydroorotate from bicarbonate: step 2/3. Catalyzes the condensation of carbamoyl phosphate and aspartate to form carbamoyl aspartate and inorganic phosphate, the committed step in the de novo pyrimidine nucleotide biosynthesis pathway. The polypeptide is Aspartate carbamoyltransferase catalytic subunit (Bacteroides fragilis (strain ATCC 25285 / DSM 2151 / CCUG 4856 / JCM 11019 / LMG 10263 / NCTC 9343 / Onslow / VPI 2553 / EN-2)).